Consider the following 324-residue polypeptide: Ribose-phosphate pyrophosphokinase 1 (324 aa).

ATP-binding positions include 39–41 (DGE) and 98–99 (RQ). Mg(2+) contacts are provided by H132 and D174. K197 is an active-site residue. Residues R199, D223, and 227–231 (DTAGT) each bind D-ribose 5-phosphate.

The protein belongs to the ribose-phosphate pyrophosphokinase family. Class I subfamily. As to quaternary structure, homohexamer. The cofactor is Mg(2+).

It localises to the cytoplasm. The enzyme catalyses D-ribose 5-phosphate + ATP = 5-phospho-alpha-D-ribose 1-diphosphate + AMP + H(+). Its pathway is metabolic intermediate biosynthesis; 5-phospho-alpha-D-ribose 1-diphosphate biosynthesis; 5-phospho-alpha-D-ribose 1-diphosphate from D-ribose 5-phosphate (route I): step 1/1. Functionally, involved in the biosynthesis of the central metabolite phospho-alpha-D-ribosyl-1-pyrophosphate (PRPP) via the transfer of pyrophosphoryl group from ATP to 1-hydroxyl of ribose-5-phosphate (Rib-5-P). This is Ribose-phosphate pyrophosphokinase 1 from Lactococcus lactis subsp. lactis (strain IL1403) (Streptococcus lactis).